A 1019-amino-acid chain; its full sequence is UPF0182 protein Tery_0938 (1019 aa).

The next 9 helical transmembrane spans lie at 23–43 (IHIL…GFST), 67–87 (TETW…LVNL), 128–148 (LSLS…GLIL), 192–212 (LWLL…PILW), 213–233 (LSVF…SHWA), 270–290 (FWLI…YLLS), 313–333 (LGGG…FELL), 355–375 (YVFL…QAIF), and 416–436 (AILT…PKIV).

Belongs to the UPF0182 family.

Its subcellular location is the cell membrane. The polypeptide is UPF0182 protein Tery_0938 (Trichodesmium erythraeum (strain IMS101)).